We begin with the raw amino-acid sequence, 152 residues long: MADSERLSAPGCWAACTNFSRTRKGILLFAEIILCLVILICFSASTPGYSSLSVIEMILAAIFFVVYMCDLHTKIPFINWPWSDFFRTLIAAILYLITSIVVLVERGNHSKIVAGVLGLIATCLFGYDAYVTFPVRQPRHTAAPTDPADGPV.

Asparagine 18 carries an N-linked (GlcNAc...) asparagine glycan. Positions 19 to 137 (FSRTRKGILL…DAYVTFPVRQ (119 aa)) constitute an MARVEL domain. The next 3 helical transmembrane spans lie at 25–45 (GILL…FSAS), 48–68 (GYSS…VVYM), and 85–105 (FFRT…VLVE). Residue asparagine 108 is glycosylated (N-linked (GlcNAc...) asparagine). The chain crosses the membrane as a helical span at residues 112 to 132 (IVAGVLGLIATCLFGYDAYVT).

Enriched in colonic mucosa. The expression of A4 follows a gradient along the crypto-villus axis with the most abundant message occurring in the lower half of the crypt.

It is found in the membrane. In terms of biological role, may play a role in cell differentiation in the intestinal epithelium. In Homo sapiens (Human), this protein is Proteolipid protein 2 (PLP2).